An 85-amino-acid chain; its full sequence is UPF0386 protein RHECIAT_CH0001945 (85 aa).

The protein belongs to the UPF0386 family.

This Rhizobium etli (strain CIAT 652) protein is UPF0386 protein RHECIAT_CH0001945.